A 1050-amino-acid chain; its full sequence is NAD-specific glutamate dehydrogenase (1050 aa).

Residues 1 to 39 form a disordered region; sequence MDSPSAPVPAHKLVDRLKDQTPRHPSPQPTHVSYPKVNG. Basic and acidic residues predominate over residues 12-22; the sequence is KLVDRLKDQTP. Residue Lys-594 is part of the active site.

It belongs to the Glu/Leu/Phe/Val dehydrogenases family. In terms of assembly, homotetramer.

The enzyme catalyses L-glutamate + NAD(+) + H2O = 2-oxoglutarate + NH4(+) + NADH + H(+). The protein is NAD-specific glutamate dehydrogenase (gdh-1) of Neurospora crassa (strain ATCC 24698 / 74-OR23-1A / CBS 708.71 / DSM 1257 / FGSC 987).